Here is a 229-residue protein sequence, read N- to C-terminus: Dihydrofolate reductase (229 aa).

One can recognise a DHFR domain in the interval 11-227; that stretch reads SITAVVAATA…VKYIFEMWVL (217 aa). NADP(+)-binding positions include A17 and 23–29; that span reads GIGLNGG. 37–42 provides a ligand contact to substrate; the sequence is EMKYFA. 64–66 contributes to the NADP(+) binding site; that stretch reads RKT. Residue R80 coordinates substrate. Residues 86 to 88 and 127 to 134 contribute to the NADP(+) site; these read SGK and GGATLYTS.

It belongs to the dihydrofolate reductase family. As to quaternary structure, monomer.

It catalyses the reaction (6S)-5,6,7,8-tetrahydrofolate + NADP(+) = 7,8-dihydrofolate + NADPH + H(+). Its pathway is cofactor biosynthesis; tetrahydrofolate biosynthesis; 5,6,7,8-tetrahydrofolate from 7,8-dihydrofolate: step 1/1. Its function is as follows. Key enzyme in folate metabolism. Catalyzes an essential reaction for de novo glycine and purine synthesis, and for DNA precursor synthesis. The chain is Dihydrofolate reductase (DFR1) from Cryptococcus neoformans var. neoformans serotype D (strain JEC21 / ATCC MYA-565) (Filobasidiella neoformans).